Reading from the N-terminus, the 443-residue chain is D(2) dopamine receptor (443 aa).

Residues 1–37 (MDPLNLSWYDDDLERQNWSRPFNGSDGKADRPHYNYY) are Extracellular-facing. 3 N-linked (GlcNAc...) asparagine glycosylation sites follow: Asn5, Asn17, and Asn23. A helical membrane pass occupies residues 38–60 (ATLLTLLIAVIVFGNVLVCMAVS). Residues 61–70 (REKALQTTTN) are Cytoplasmic-facing. The helical transmembrane segment at 71–93 (YLIVSLAVADLLVATLVMPWVVY) threads the bilayer. At 94–108 (LEVVGEWKFSRIHCD) the chain is on the extracellular side. An intrachain disulfide couples Cys107 to Cys182. The chain crosses the membrane as a helical span at residues 109 to 130 (IFVTLDVMMCTASILNLCAISI). At 131–151 (DRYTAVAMPMLYNTRYSSKRR) the chain is on the cytoplasmic side. Residues 152-172 (VTVMISIVWVLSFTISCPLLF) form a helical membrane-spanning segment. The Extracellular segment spans residues 173-188 (GLNNADQNECIIANPA). The chain crosses the membrane as a helical span at residues 189-213 (FVVYSSIVSFYVPFIVTLLVYIKIY). Positions 211–373 (KIYIVLRRRR…SQQKEKKATQ (163 aa)) are interaction with PPP1R9B. Residues 214–373 (IVLRRRRKRV…SQQKEKKATQ (160 aa)) are Cytoplasmic-facing. The segment at 281–332 (MEMLSSTSPPERTRYSPIPPSHHQLTLPDPSHHGLHSTPDSPAKPEKNGHAK) is disordered. The segment covering 323 to 332 (AKPEKNGHAK) has biased composition (basic and acidic residues). A helical membrane pass occupies residues 374–395 (MLAIVLGVFIICWLPFFITHIL). At 396 to 409 (NIHCDCNIPPVLYS) the chain is on the extracellular side. Cys399 and Cys401 are disulfide-bonded. A helical membrane pass occupies residues 410–431 (AFTWLGYVNSAVNPIIYTTFNI). Over 432 to 443 (EFRKAFLKILHC) the chain is Cytoplasmic. Cys443 carries the S-palmitoyl cysteine lipid modification.

It belongs to the G-protein coupled receptor 1 family. As to quaternary structure, forms homo- and heterooligomers with DRD4. The interaction with DRD4 may modulate agonist-induced downstream signaling. Interacts with CADPS and CADPS2. Interacts with GPRASP1, PPP1R9B and CLIC6. Interacts with ARRB2. Interacts with HTR2A. Interacts with GNAI2 isoform sGi2, the interaction allows the creation of an intracellular pool of DRD2 that can be released to cell surface upon agonist stimulation. Interacts with DRD1. Interacts with KCNA2. Post-translationally, palmitoylated. Palmitoylation which is required for proper localization to the plasma membrane and stability of the receptor could be carried on by ZDHHC4, ZDHHC3 and ZDHHC8. As to expression, expressed in the anterior pituitary gland.

It is found in the cell membrane. Its subcellular location is the golgi apparatus membrane. In terms of biological role, dopamine receptor whose activity is mediated by G proteins which inhibit adenylyl cyclase. Positively regulates postnatal regression of retinal hyaloid vessels via suppression of VEGFR2/KDR activity, downstream of OPN5. The protein is D(2) dopamine receptor (DRD2) of Homo sapiens (Human).